The primary structure comprises 159 residues: UPF0336 protein ML1910 (159 aa).

This sequence belongs to the UPF0336 family.

The polypeptide is UPF0336 protein ML1910 (Mycobacterium leprae (strain TN)).